A 428-amino-acid polypeptide reads, in one-letter code: MNYLFKNGRYMNEEGKIVATDLLVQDGKIAKVAENITADNAEVIDVNGKLIAPGLVDVHVHLREPGGEHKETIETGTLAAAKGGFTTICAMPNTRPVPDCREHMEDLQNRIKEKAHVNVLPYGAITVRQAGSEMTDFETLKELGAFAFTDDGVGVQDASMMLAAMKRAAKLNMAVVAHCEENTLINKGCVHEGKFSEKHGLNGIPSVCESVHIARDILLAEAADCHYHVCHVSTKGSVRVIRDAKRAGIKVTAEVTPHHLVLCEDDIPSADPNFKMNPPLRGKEDHEALIEGLLDGTIDMIATDHAPHTAEEKAQGIERAPFGITGFETAFPLLYTNLVKKGIITLEQLIQFLTEKPADTFGLEAGRLKEGRTADITIIDLEQEEEIDPTTFLSKGKNTPFAGWKCQGWPVMTIVGGKIAWQKESALV.

Zn(2+) is bound by residues His59 and His61. Substrate-binding positions include 61-63 and Asn93; that span reads HLR. Zn(2+)-binding residues include Asp151, His178, and His231. Asn277 is a binding site for substrate. Asp304 is a binding site for Zn(2+). Asp304 is an active-site residue. Substrate contacts are provided by residues His308 and 322–323; that span reads FG.

This sequence belongs to the metallo-dependent hydrolases superfamily. DHOase family. Class I DHOase subfamily. The cofactor is Zn(2+).

It catalyses the reaction (S)-dihydroorotate + H2O = N-carbamoyl-L-aspartate + H(+). The protein operates within pyrimidine metabolism; UMP biosynthesis via de novo pathway; (S)-dihydroorotate from bicarbonate: step 3/3. Catalyzes the reversible cyclization of carbamoyl aspartate to dihydroorotate. The protein is Dihydroorotase of Bacillus anthracis (strain A0248).